A 325-amino-acid chain; its full sequence is Mitochondrial thiamine pyrophosphate carrier 1 (325 aa).

Solcar repeat units lie at residues 12 to 111 (GSRL…TTLL), 122 to 209 (PPSA…LRPH), and 216 to 312 (PFSS…ALKF). 6 helical membrane passes run 17–35 (VTAA…IAPL), 92–108 (LLYV…YRTT), 127–143 (SFVA…AATY), 184–200 (VWDR…SFFF), 223–239 (VART…TFPL), and 287–304 (GLTV…VTMW).

Belongs to the mitochondrial carrier (TC 2.A.29) family.

The protein localises to the mitochondrion inner membrane. In terms of biological role, mitochondrial transporter that mediates uptake of thiamine pyrophosphate (ThPP) into mitochondria. The protein is Mitochondrial thiamine pyrophosphate carrier 1 (TPC1) of Chaetomium globosum (strain ATCC 6205 / CBS 148.51 / DSM 1962 / NBRC 6347 / NRRL 1970) (Soil fungus).